The sequence spans 346 residues: Holliday junction branch migration complex subunit RuvB (346 aa).

The segment at 4 to 184 (TDRLIAPTAK…FGIVQRLEFY (181 aa)) is large ATPase domain (RuvB-L). Residues Arg-24, Gly-65, Lys-68, Thr-69, Thr-70, 131–133 (EDF), Arg-174, Tyr-184, and Arg-221 each bind ATP. Thr-69 provides a ligand contact to Mg(2+). The tract at residues 185–255 (NVKDLTHIVA…LADKALNMLN (71 aa)) is small ATPAse domain (RuvB-S). The segment at 258–346 (ERGFDHMDRR…QESQGGEGIA (89 aa)) is head domain (RuvB-H). The DNA site is built by Arg-294, Arg-313, and Arg-318.

Belongs to the RuvB family. As to quaternary structure, homohexamer. Forms an RuvA(8)-RuvB(12)-Holliday junction (HJ) complex. HJ DNA is sandwiched between 2 RuvA tetramers; dsDNA enters through RuvA and exits via RuvB. An RuvB hexamer assembles on each DNA strand where it exits the tetramer. Each RuvB hexamer is contacted by two RuvA subunits (via domain III) on 2 adjacent RuvB subunits; this complex drives branch migration. In the full resolvosome a probable DNA-RuvA(4)-RuvB(12)-RuvC(2) complex forms which resolves the HJ.

It is found in the cytoplasm. It catalyses the reaction ATP + H2O = ADP + phosphate + H(+). Its function is as follows. The RuvA-RuvB-RuvC complex processes Holliday junction (HJ) DNA during genetic recombination and DNA repair, while the RuvA-RuvB complex plays an important role in the rescue of blocked DNA replication forks via replication fork reversal (RFR). RuvA specifically binds to HJ cruciform DNA, conferring on it an open structure. The RuvB hexamer acts as an ATP-dependent pump, pulling dsDNA into and through the RuvAB complex. RuvB forms 2 homohexamers on either side of HJ DNA bound by 1 or 2 RuvA tetramers; 4 subunits per hexamer contact DNA at a time. Coordinated motions by a converter formed by DNA-disengaged RuvB subunits stimulates ATP hydrolysis and nucleotide exchange. Immobilization of the converter enables RuvB to convert the ATP-contained energy into a lever motion, pulling 2 nucleotides of DNA out of the RuvA tetramer per ATP hydrolyzed, thus driving DNA branch migration. The RuvB motors rotate together with the DNA substrate, which together with the progressing nucleotide cycle form the mechanistic basis for DNA recombination by continuous HJ branch migration. Branch migration allows RuvC to scan DNA until it finds its consensus sequence, where it cleaves and resolves cruciform DNA. The sequence is that of Holliday junction branch migration complex subunit RuvB from Cellvibrio japonicus (strain Ueda107) (Pseudomonas fluorescens subsp. cellulosa).